The primary structure comprises 690 residues: Wilms tumor protein 1-interacting protein homolog (690 aa).

2 disordered regions span residues 151–316 (MSAT…VSPR) and 328–372 (TLGS…PRSS). Over residues 152 to 186 (SATSPRSSMASSASSSQEHSKYSSPRSSISSNALS) the composition is skewed to low complexity. Polar residues-rich tracts occupy residues 204–214 (EKYTSPRSSLG), 223–233 (PRSSYASTTSD), 240–261 (PRAS…TSGI), and 272–292 (PRSS…SYSD). Positions 335 to 357 (SVVSPRSSISSHSSRSSRSSRGS) are enriched in low complexity. LIM zinc-binding domains lie at 479–540 (GICI…SGFQ), 544–603 (DKCF…TVFA), and 604–673 (PKCA…RLSV).

The protein belongs to the zyxin/ajuba family. In terms of assembly, interacts with prickle3.

The protein localises to the cell junction. Its subcellular location is the adherens junction. The protein resides in the nucleus. Functionally, may monitor slit diaphragm protein assembly, a specialized adherens junction characteristic of podocytes. In case of podocyte injury, it shuttles into the nucleus and acts as a transcription regulator. Plays a role in the regulation of cell morphology and cytoskeletal organization. Acts as a transcriptional corepressor for snai1 and snai2/slug and plays a role in regulating neural crest development. Involved in the organization of the basal body. Involved in cilia growth and positioning. The chain is Wilms tumor protein 1-interacting protein homolog (wtip) from Xenopus laevis (African clawed frog).